The primary structure comprises 1173 residues: Pyruvate-flavodoxin oxidoreductase (1173 aa).

2 consecutive 4Fe-4S ferredoxin-type domains span residues 681–710 and 735–766; these read NVPVWQTDKCTQCNQCAFICPHAAIRPVLI and YRLAVSPLDCSGCGNCADVCPVKGKALSMQPL. [4Fe-4S] cluster-binding residues include Cys-690, Cys-693, Cys-696, Cys-700, Cys-744, Cys-747, Cys-750, Cys-754, Cys-810, Cys-813, and Cys-838. Residues 922–933 show a composition bias toward basic and acidic residues; that stretch reads GEGTRERAEKVG. Residues 922 to 946 form a disordered region; sequence GEGTRERAEKVGDTSGFANAREKSR. Cys-1075 contributes to the [4Fe-4S] cluster binding site.

It belongs to the pyruvate:ferredoxin/flavodoxin oxidoreductase family. It depends on [4Fe-4S] cluster as a cofactor.

The enzyme catalyses oxidized [flavodoxin] + pyruvate + CoA + 2 H(+) = reduced [flavodoxin] + acetyl-CoA + CO2. Oxidoreductase required for the transfer of electrons from pyruvate to flavodoxin, which reduces nitrogenase. This is Pyruvate-flavodoxin oxidoreductase (nifJ) from Enterobacter agglomerans (Erwinia herbicola).